We begin with the raw amino-acid sequence, 351 residues long: Signal recognition particle receptor FtsY (351 aa).

GTP contacts are provided by residues 156-163 (GINGTGKT), 238-242 (DTAGR), and 302-305 (TKLD).

The protein belongs to the GTP-binding SRP family. FtsY subfamily. Part of the signal recognition particle protein translocation system, which is composed of SRP and FtsY. SRP is a ribonucleoprotein composed of Ffh and a 4.5S RNA molecule.

The protein resides in the cell membrane. The protein localises to the cytoplasm. It carries out the reaction GTP + H2O = GDP + phosphate + H(+). Its function is as follows. Involved in targeting and insertion of nascent membrane proteins into the cytoplasmic membrane. Acts as a receptor for the complex formed by the signal recognition particle (SRP) and the ribosome-nascent chain (RNC). Interaction with SRP-RNC leads to the transfer of the RNC complex to the Sec translocase for insertion into the membrane, the hydrolysis of GTP by both Ffh and FtsY, and the dissociation of the SRP-FtsY complex into the individual components. This Buchnera aphidicola subsp. Schizaphis graminum (strain Sg) protein is Signal recognition particle receptor FtsY.